A 139-amino-acid chain; its full sequence is I-Kappa-B like protein N1 (139 aa).

ANK repeat units follow at residues 16 to 48, 54 to 87, and 92 to 122; these read NGENLLHAMCRHGNSLALSIIAQSINKNYQYLL, EGRKCIHIAAVMHKGQVATELIIILLNFGADVNG, and TGDTVLHIAVYLKDYYLAEWLCRRSGININA.

It belongs to the polydnaviridae I-Kappa-B-like protein family.

Suppresses the host immune response through NF-kappa-B inactivation. Possesses ankyrin repeat domain required for NF-kappa-B binding but lack the regulatory regions required for dissociation from NF-kappa-B and degradation. Therefore, prevents host NF-kappa-B release and subsequent activation. This is I-Kappa-B like protein N1 (N2) from Microplitis demolitor bracovirus (isolate Webb) (MdBV).